Here is an 88-residue protein sequence, read N- to C-terminus: Small ribosomal subunit protein bS20 (88 aa).

The segment at 1 to 25 (MANTPSAKKAARKIERRTAVNRARR) is disordered.

The protein belongs to the bacterial ribosomal protein bS20 family.

In terms of biological role, binds directly to 16S ribosomal RNA. This chain is Small ribosomal subunit protein bS20, found in Azorhizobium caulinodans (strain ATCC 43989 / DSM 5975 / JCM 20966 / LMG 6465 / NBRC 14845 / NCIMB 13405 / ORS 571).